The following is a 426-amino-acid chain: Protein arginine methyltransferase NDUFAF7 homolog, mitochondrial (426 aa).

Belongs to the NDUFAF7 family.

It is found in the mitochondrion. The catalysed reaction is L-arginyl-[protein] + 2 S-adenosyl-L-methionine = N(omega),N(omega)'-dimethyl-L-arginyl-[protein] + 2 S-adenosyl-L-homocysteine + 2 H(+). Functionally, arginine methyltransferase involved in the assembly or stability of mitochondrial NADH:ubiquinone oxidoreductase complex (complex I). This is Protein arginine methyltransferase NDUFAF7 homolog, mitochondrial from Caenorhabditis elegans.